Here is a 99-residue protein sequence, read N- to C-terminus: Integration host factor subunit alpha (99 aa).

The disordered stretch occupies residues 49-75 (FGNFDLRDKNQRPGRNPKTGEDIPITA).

This sequence belongs to the bacterial histone-like protein family. As to quaternary structure, heterodimer of an alpha and a beta chain.

Its function is as follows. This protein is one of the two subunits of integration host factor, a specific DNA-binding protein that functions in genetic recombination as well as in transcriptional and translational control. The polypeptide is Integration host factor subunit alpha (Salmonella agona (strain SL483)).